A 57-amino-acid polypeptide reads, in one-letter code: Preprotein translocase subunit SecG (57 aa).

Residues 1-33 are Cytoplasmic-facing; it reads MARRRRYEGLNPFVAAGLIKFSEEGELERIKLT. The chain crosses the membrane as a helical span at residues 34–55; sequence PKSAVVISVALIAAILVLNLIH. At 56–57 the chain is on the extracellular side; the sequence is PL.

It belongs to the SEC61-beta family. As to quaternary structure, component of the protein translocase complex. Heterotrimer consisting of alpha (SecY), beta (SecG) and gamma (SecE) subunits. Can form oligomers of the heterotrimer.

It is found in the cell membrane. Functionally, involved in protein export. The function of the beta subunit is unknown, but it may be involved in stabilization of the trimeric complex. The sequence is that of Preprotein translocase subunit SecG from Pyrobaculum neutrophilum (strain DSM 2338 / JCM 9278 / NBRC 100436 / V24Sta) (Thermoproteus neutrophilus).